We begin with the raw amino-acid sequence, 209 residues long: Ras-like protein (209 aa).

10 to 17 (GGGLVGKS) provides a ligand contact to GTP. Positions 55-63 (YDPTVEDSR) match the Effector region motif. T58 is subject to Phosphothreonine. GTP contacts are provided by residues 79–83 (DTAGQ) and 140–143 (NKAD). Position 206 is a cysteine methyl ester (C206). C206 is lipidated: S-geranylgeranyl cysteine. The propeptide at 207 to 209 (LII) is removed in mature form.

The protein belongs to the small GTPase superfamily. Ras family. Post-translationally, phosphorylated in the presence of insulin.

The protein resides in the cell membrane. The enzyme catalyses GTP + H2O = GDP + phosphate + H(+). Its activity is regulated as follows. Alternates between an inactive form bound to GDP and an active form bound to GTP. Activated by a guanine nucleotide-exchange factor (GEF) and inactivated by a GTPase-activating protein (GAP). In terms of biological role, this protein is activated by the insulin/insulin (insulin-like)-receptor system. This transition enables the ras protein to interact with the lectin-receptor/lectin complex, a process which ultimately lead to an initiation of an intra-cellular signal-transduction chain. The polypeptide is Ras-like protein (Geodia cydonium (Sponge)).